A 434-amino-acid chain; its full sequence is 26S proteasome regulatory subunit RPN6 (434 aa).

The residue at position 2 (S2) is an N-acetylserine. The PCI domain occupies 235 to 404; sequence AFSYFFESFE…GWLYVYETPN (170 aa).

It belongs to the proteasome subunit S9 family. In terms of assembly, component of the lid subcomplex of the 19S proteasome regulatory particle complex (also named PA700 complex). The 26S proteasome consists of a 20S proteasome core and two 19S regulatory subunits. Post-translationally, N-acetylated by NAT1.

Functionally, component of the lid subcomplex of the 26S proteasome, a multiprotein complex involved in the ATP-dependent degradation of ubiquitinated proteins. In the complex, RPN6 is required for proteasome assembly. The chain is 26S proteasome regulatory subunit RPN6 (RPN6) from Saccharomyces cerevisiae (strain ATCC 204508 / S288c) (Baker's yeast).